Reading from the N-terminus, the 355-residue chain is U5 small nuclear ribonucleoprotein 40 kDa protein (355 aa).

7 WD repeats span residues glycine 60–serine 99, glycine 103–arginine 142, glutamate 145–leucine 185, glutamine 187–tyrosine 226, serine 230–arginine 269, asparagine 280–cysteine 319, and glycine 322–proline 355.

Component of the pre-catalytic and catalytic spliceosome complexes. Component of the postcatalytic spliceosome P complex. Part of the U5 snRNP complex. Component of the U4/U6-U5 tri-snRNP complex.

It is found in the nucleus. Its function is as follows. Required for pre-mRNA splicing as component of the activated spliceosome. Component of the U5 small nuclear ribonucleoprotein (snRNP) complex and the U4/U6-U5 tri-snRNP complex, building blocks of the spliceosome. The protein is U5 small nuclear ribonucleoprotein 40 kDa protein (snrnp40) of Dictyostelium discoideum (Social amoeba).